We begin with the raw amino-acid sequence, 389 residues long: 1-acyl-sn-glycerol-3-phosphate acyltransferase 2 (389 aa).

A helical transmembrane segment spans residues 2-22 (VIAAAVIVPLGLLFFISGLAV). The HXXXXD motif motif lies at 91 to 96 (HRSDID). A run of 2 helical transmembrane segments spans residues 305 to 325 (LAVV…FLHW) and 333 to 353 (KGIT…QILI). Residues 357 to 389 (QSERSTPAKVVPAKPKDNHHPESSSQTETEKEK) form a disordered region. Basic and acidic residues predominate over residues 370-389 (KPKDNHHPESSSQTETEKEK).

This sequence belongs to the 1-acyl-sn-glycerol-3-phosphate acyltransferase family. Interacts with GPAT9 and DGAT1. In terms of tissue distribution, present in roots, leaves, stems, floral buds and siliques (at protein level). Widely expressed. In contrast to LPAT1, it is not expressed at higher level in leaves.

It localises to the endoplasmic reticulum membrane. The catalysed reaction is a 1-acyl-sn-glycero-3-phosphate + an acyl-CoA = a 1,2-diacyl-sn-glycero-3-phosphate + CoA. It participates in phospholipid metabolism; CDP-diacylglycerol biosynthesis; CDP-diacylglycerol from sn-glycerol 3-phosphate: step 2/3. Its function is as follows. Converts lysophosphatidic acid (LPA) into phosphatidic acid by incorporating acyl moiety at the 2 position. Has preference for C-18-CoA substrates compared to C-16-CoA substrates. Required for female but not male gametophyte development. The polypeptide is 1-acyl-sn-glycerol-3-phosphate acyltransferase 2 (LPAT2) (Arabidopsis thaliana (Mouse-ear cress)).